A 205-amino-acid chain; its full sequence is UPF0688 protein C1orf174 homolog (205 aa).

Positions 1 to 18 are enriched in basic residues; it reads MRKRKLSDRVRCSARLKN. Disordered regions lie at residues 1-128 and 184-205; these read MRKR…PSKV and AKEE…EGNI. The span at 46–63 shows a compositional bias: basic and acidic residues; the sequence is NTDKKSPKKLENDEKGLM. Residues 71 to 108 are compositionally biased toward polar residues; sequence INKTDNTASNESNAGNVNTCPSASPFSDLNEVSRNGLT. A compositionally biased stretch (acidic residues) spans 187–196; sequence EEEDDDDDYA.

The protein belongs to the UPF0688 family.

The protein localises to the nucleus. The protein is UPF0688 protein C1orf174 homolog of Xenopus laevis (African clawed frog).